Reading from the N-terminus, the 374-residue chain is Carbamoyl phosphate synthase small chain (374 aa).

The tract at residues 1–183 (MVLADGQMIW…QNGYSVVDNQ (183 aa)) is CPSase. Residues Ser41, Gly235, and Gly237 each coordinate L-glutamine. The 188-residue stretch at 187–374 (HVVAIDYGLK…FIDLIAKERP (188 aa)) folds into the Glutamine amidotransferase type-1 domain. The Nucleophile role is filled by Cys264. Residues Leu265, Gln268, Asn306, Gly308, and Phe309 each coordinate L-glutamine. Catalysis depends on residues His348 and Glu350.

It belongs to the CarA family. Composed of two chains; the small (or glutamine) chain promotes the hydrolysis of glutamine to ammonia, which is used by the large (or ammonia) chain to synthesize carbamoyl phosphate. Tetramer of heterodimers (alpha,beta)4.

The catalysed reaction is hydrogencarbonate + L-glutamine + 2 ATP + H2O = carbamoyl phosphate + L-glutamate + 2 ADP + phosphate + 2 H(+). It catalyses the reaction L-glutamine + H2O = L-glutamate + NH4(+). The protein operates within amino-acid biosynthesis; L-arginine biosynthesis; carbamoyl phosphate from bicarbonate: step 1/1. It functions in the pathway pyrimidine metabolism; UMP biosynthesis via de novo pathway; (S)-dihydroorotate from bicarbonate: step 1/3. Functionally, small subunit of the glutamine-dependent carbamoyl phosphate synthetase (CPSase). CPSase catalyzes the formation of carbamoyl phosphate from the ammonia moiety of glutamine, carbonate, and phosphate donated by ATP, constituting the first step of 2 biosynthetic pathways, one leading to arginine and/or urea and the other to pyrimidine nucleotides. The small subunit (glutamine amidotransferase) binds and cleaves glutamine to supply the large subunit with the substrate ammonia. The sequence is that of Carbamoyl phosphate synthase small chain from Zymomonas mobilis subsp. mobilis (strain ATCC 31821 / ZM4 / CP4).